A 118-amino-acid chain; its full sequence is Vesicle-associated membrane protein 1 (118 aa).

Residues 1–15 are compositionally biased toward low complexity; that stretch reads MSAPAQPPAEGTEGA. The segment at 1–36 is disordered; that stretch reads MSAPAQPPAEGTEGAAPGGGPPGPPPNMTSNRRLQQ. Over 1-96 the chain is Cytoplasmic; that stretch reads MSAPAQPPAE…KRKYWWKNCK (96 aa). The region spanning 33 to 93 is the v-SNARE coiled-coil homology domain; the sequence is RLQQTQAQVE…AKLKRKYWWK (61 aa). A Phosphoserine modification is found at Ser-63. Residues 97-116 traverse the membrane as a helical; Anchor for type IV membrane protein segment; the sequence is MMIMLGAICAIIVVVIVIYF. Over 117 to 118 the chain is Vesicular; sequence FT.

This sequence belongs to the synaptobrevin family. In terms of assembly, interacts with VAPA and VAPB. In terms of processing, (Microbial infection) Targeted and hydrolyzed by C.botulinum neurotoxin type X (BoNT/X) which hydrolyzes the 68-Arg-|-Ala-69 bond and probably inhibits neurotransmitter release. It remains unknown whether BoNT/X is ever produced, or what organisms it targets. As to expression, highly expressed in the zona incerta and rostral periolivary region of the brain. Other neuroanatomical regions show negligible expression. Expressed in the retina, expression observed in the outer segments of the photoreceptors, in the outer and inner plexiform layers, and in a subset of ganglion cells.

Its subcellular location is the cytoplasmic vesicle. The protein localises to the secretory vesicle. It is found in the synaptic vesicle membrane. The protein resides in the synapse. It localises to the synaptosome. Its subcellular location is the cytoplasmic vesicle membrane. Functionally, involved in the targeting and/or fusion of transport vesicles to their target membrane. This chain is Vesicle-associated membrane protein 1 (Vamp1), found in Mus musculus (Mouse).